The primary structure comprises 135 residues: Photosystem II extrinsic protein U (135 aa).

Residues 1 to 29 form the signal peptide; it reads MKRLLSWLTGALVMASLMAGLVMPSSVYA.

It belongs to the PsbU family. PSII is composed of 1 copy each of membrane proteins PsbA, PsbB, PsbC, PsbD, PsbE, PsbF, PsbH, PsbI, PsbJ, PsbK, PsbL, PsbM, PsbT, PsbX, PsbY, PsbZ, Psb30/Ycf12, peripheral proteins PsbO, CyanoQ (PsbQ), PsbU, PsbV and a large number of cofactors. It forms dimeric complexes.

It localises to the cellular thylakoid membrane. One of the extrinsic, lumenal subunits of photosystem II (PSII). PSII is a light-driven water plastoquinone oxidoreductase, using light energy to abstract electrons from H(2)O, generating a proton gradient subsequently used for ATP formation. The extrinsic proteins stabilize the structure of photosystem II oxygen-evolving complex (OEC), the ion environment of oxygen evolution and protect the OEC against heat-induced inactivation. The polypeptide is Photosystem II extrinsic protein U (Synechococcus sp. (strain CC9605)).